Reading from the N-terminus, the 261-residue chain is tRNA pseudouridine synthase A 2 (261 aa).

Asp59 functions as the Nucleophile in the catalytic mechanism. Tyr117 contacts substrate.

The protein belongs to the tRNA pseudouridine synthase TruA family. As to quaternary structure, homodimer.

It catalyses the reaction uridine(38/39/40) in tRNA = pseudouridine(38/39/40) in tRNA. Formation of pseudouridine at positions 38, 39 and 40 in the anticodon stem and loop of transfer RNAs. The protein is tRNA pseudouridine synthase A 2 of Desulfotalea psychrophila (strain LSv54 / DSM 12343).